A 261-amino-acid chain; its full sequence is Indole-3-glycerol phosphate synthase (261 aa).

It belongs to the TrpC family.

The enzyme catalyses 1-(2-carboxyphenylamino)-1-deoxy-D-ribulose 5-phosphate + H(+) = (1S,2R)-1-C-(indol-3-yl)glycerol 3-phosphate + CO2 + H2O. The protein operates within amino-acid biosynthesis; L-tryptophan biosynthesis; L-tryptophan from chorismate: step 4/5. This is Indole-3-glycerol phosphate synthase from Burkholderia thailandensis (strain ATCC 700388 / DSM 13276 / CCUG 48851 / CIP 106301 / E264).